The following is a 278-amino-acid chain: Autotransporter adhesin BtaF (278 aa).

The first 29 residues, 1–29 (MKLPPVFVFELVENQGLANIALIRPRVIA), serve as a signal peptide directing secretion. Positions 30-182 (PDNNLRPGGI…RAAIRQNSAA (153 aa)) are surface exposed passenger domain. Residues 186 to 224 (LGQRVDGLQGQINSARKEARAGAANAAALSGLRYDNRPG) form an outer membrane translocation of the passenger domain region. A translocator domain region spans residues 225-278 (KVSIATGVGGFKGSTALAAGIGYTSKNENARYNVSVAYNEAGTSWNAGASFTLN).

The protein belongs to the autotransporter-2 (AT-2) (TC 1.B.40) family. In terms of assembly, homotrimer.

Its subcellular location is the cell surface. The protein resides in the cell outer membrane. Participates in bacterial attachment to several surfaces, including various extracellular matrix (ECM) components and a hydrophobic abiotic surface. Involved in adhesion to host epithelial cells and is required for full virulence in mice. Also implicated in the resistance to porcine serum. This is Autotransporter adhesin BtaF from Brucella suis biovar 1 (strain 1330).